Reading from the N-terminus, the 188-residue chain is UPF0397 protein LCK_00164 (188 aa).

5 consecutive transmembrane segments (helical) span residues 15–35 (VVAT…IAIP), 48–68 (GWLA…VGLI), 79–99 (GAPW…LGFG), 121–141 (WQAV…DIII), and 154–174 (AVTT…LLVA).

This sequence belongs to the UPF0397 family.

It localises to the cell membrane. The sequence is that of UPF0397 protein LCK_00164 from Leuconostoc citreum (strain KM20).